The primary structure comprises 182 residues: UPF0301 protein NGK_1355 (182 aa).

It belongs to the UPF0301 (AlgH) family.

The polypeptide is UPF0301 protein NGK_1355 (Neisseria gonorrhoeae (strain NCCP11945)).